The chain runs to 635 residues: RING finger protein 207 (635 aa).

The RING-type zinc-finger motif lies at 25–64 (CPLCHGQYERPCLLDCFHDFCTGCLRGRATDGRLSCPLCQ). A B box-type; atypical zinc finger spans residues 93-145 (SEAVRCANCDLECSQQDAETTYFCNTCGQPLCARCREETHRARMFARHDIVAL). Cys-98, Cys-101, Cys-127, and His-132 together coordinate Zn(2+). The stretch at 422-460 (EHCRHYEDSYRGLQVEVQNLKDQVQELHRDLTKHHSLIK) forms a coiled coil. The segment covering 553 to 562 (QVPVDEHAEH) has biased composition (basic and acidic residues). Residues 553–635 (QVPVDEHAEH…SGSKGACYQA (83 aa)) are disordered. Polar residues predominate over residues 589–598 (PNGSSWSLSS). The segment covering 607–622 (NQDHLRPKLEAGDEGW) has biased composition (basic and acidic residues).

As to quaternary structure, interacts with the core-glycosylated, but not the fully glycosylated form of KCNH2/HERG. Interacts with DNAJA1 and HSPA8. Interacts (via the C-terminus) with HSPA1A; this interaction additively increases KCNH2 expression.

Its subcellular location is the cytoplasm. Plays a role in cardiac repolarization possibly by stabilizing membrane expression of the potassium channel KCNH2/HERG, or by assisting its synthesis, folding or export from the endoplasmic reticulum, in a heat shock protein-dependent manner. In Mus musculus (Mouse), this protein is RING finger protein 207 (Rnf207).